We begin with the raw amino-acid sequence, 96 residues long: (4S)-4-hydroxy-5-phosphonooxypentane-2,3-dione isomerase (96 aa).

Residues 2–91 form the ABM domain; sequence HVTLVEINVH…MTGPRKKRLF (90 aa).

This sequence belongs to the LsrG family. In terms of assembly, homodimer.

The protein resides in the cytoplasm. The enzyme catalyses (2S)-2-hydroxy-3,4-dioxopentyl phosphate = 3-hydroxy-2,4-dioxopentyl phosphate. In terms of biological role, involved in the degradation of phospho-AI-2, thereby terminating induction of the lsr operon and closing the AI-2 signaling cycle. Catalyzes the conversion of (4S)-4-hydroxy-5-phosphonooxypentane-2,3-dione (P-DPD) to 3-hydroxy-5-phosphonooxypentane-2,4-dione (P-HPD). The protein is (4S)-4-hydroxy-5-phosphonooxypentane-2,3-dione isomerase of Escherichia coli O9:H4 (strain HS).